We begin with the raw amino-acid sequence, 474 residues long: tRNA-2-methylthio-N(6)-dimethylallyladenosine synthase (474 aa).

Residues K3–S120 form the MTTase N-terminal domain. Residues C12, C49, C83, C157, C161, and C164 each contribute to the [4Fe-4S] cluster site. Residues R143–R375 enclose the Radical SAM core domain. Residues R378–R441 form the TRAM domain.

The protein belongs to the methylthiotransferase family. MiaB subfamily. Monomer. The cofactor is [4Fe-4S] cluster.

The protein resides in the cytoplasm. The enzyme catalyses N(6)-dimethylallyladenosine(37) in tRNA + (sulfur carrier)-SH + AH2 + 2 S-adenosyl-L-methionine = 2-methylsulfanyl-N(6)-dimethylallyladenosine(37) in tRNA + (sulfur carrier)-H + 5'-deoxyadenosine + L-methionine + A + S-adenosyl-L-homocysteine + 2 H(+). In terms of biological role, catalyzes the methylthiolation of N6-(dimethylallyl)adenosine (i(6)A), leading to the formation of 2-methylthio-N6-(dimethylallyl)adenosine (ms(2)i(6)A) at position 37 in tRNAs that read codons beginning with uridine. This is tRNA-2-methylthio-N(6)-dimethylallyladenosine synthase from Vibrio vulnificus (strain YJ016).